We begin with the raw amino-acid sequence, 173 residues long: Disulfide bond formation protein B 2 (173 aa).

The Cytoplasmic portion of the chain corresponds to 1–9; that stretch reads MSLAGSRLL. The helical transmembrane segment at 10–26 threads the bilayer; it reads FSLVFLVGALASWAAFN. Residues 27-44 lie on the Periplasmic side of the membrane; sequence LQTGGGLESCSLWSVQRL. Residues 45–61 form a helical membrane-spanning segment; sequence LLLALGGVNLLAVIQGP. Residues 62–67 lie on the Cytoplasmic side of the membrane; it reads GRVGRA. A helical transmembrane segment spans residues 68 to 85; the sequence is VYWGLNLLLGLLGVVTAG. Residues 86–142 are Periplasmic-facing; that stretch reads RHVLLQNIPSEQLLACLPDMSFMLRQLSWWQALKLTFMGTSDCAEVTWTLLDMSLPE. Cysteines 101 and 128 form a disulfide. The helical transmembrane segment at 143–161 threads the bilayer; that stretch reads WSLLFFVIMLIFSGYRLWR. Residues 162–173 are Cytoplasmic-facing; it reads QLRGARKAVALP.

This sequence belongs to the DsbB family.

The protein resides in the cell inner membrane. In terms of biological role, required for disulfide bond formation in some periplasmic proteins. Acts by oxidizing the DsbA protein. This Pseudomonas fluorescens (strain ATCC BAA-477 / NRRL B-23932 / Pf-5) protein is Disulfide bond formation protein B 2.